A 798-amino-acid chain; its full sequence is RNA cytosine-C(5)-methyltransferase NSUN2 (798 aa).

Basic residues predominate over residues 1–13; sequence MGRRNRRNRQRHQ. The interval 1–30 is disordered; the sequence is MGRRNRRNRQRHQRSTEQRSPAEEEQRRKA. Residues 14 to 30 show a composition bias toward basic and acidic residues; sequence RSTEQRSPAEEEQRRKA. S-adenosyl-L-methionine contacts are provided by residues 186 to 192, Asp-217, Asp-244, and Asp-270; that span reads CAAPGSK. The Nucleophile role is filled by Cys-323. 2 disordered regions span residues 476-499 and 723-798; these read DEPAVDTENGETKPCTNQSDSSKT and KACD…ESVD. Residues 723-747 show a composition bias toward basic and acidic residues; that stretch reads KACDEEHIDEKMDIDGAKEESKELS. The span at 751 to 762 shows a compositional bias: acidic residues; sequence SGDDEDPKEEDV. Basic and acidic residues predominate over residues 763–772; it reads IDRGVLEHVA.

Belongs to the class I-like SAM-binding methyltransferase superfamily. RsmB/NOP family. TRM4 subfamily.

It localises to the nucleus. The protein localises to the nucleolus. It is found in the cytoplasm. The protein resides in the mitochondrion. Its subcellular location is the cytoskeleton. It localises to the spindle. The protein localises to the secreted. It is found in the extracellular exosome. It carries out the reaction cytidine(48) in tRNA + S-adenosyl-L-methionine = 5-methylcytidine(48) in tRNA + S-adenosyl-L-homocysteine + H(+). The catalysed reaction is cytidine(49) in tRNA + S-adenosyl-L-methionine = 5-methylcytidine(49) in tRNA + S-adenosyl-L-homocysteine + H(+). It catalyses the reaction cytidine(50) in tRNA + S-adenosyl-L-methionine = 5-methylcytidine(50) in tRNA + S-adenosyl-L-homocysteine + H(+). The enzyme catalyses cytidine(34) in tRNA precursor + S-adenosyl-L-methionine = 5-methylcytidine(34) in tRNA precursor + S-adenosyl-L-homocysteine + H(+). It carries out the reaction a cytidine in mRNA + S-adenosyl-L-methionine = a 5-methylcytidine in mRNA + S-adenosyl-L-homocysteine + H(+). Functionally, RNA cytosine C(5)-methyltransferase that methylates cytosine to 5-methylcytosine (m5C) in various RNAs, such as tRNAs, mRNAs and some long non-coding RNAs (lncRNAs). Involved in various processes, such as epidermal stem cell differentiation, testis differentiation and maternal to zygotic transition during early development: acts by increasing protein synthesis; cytosine C(5)-methylation promoting tRNA stability and preventing mRNA decay. Methylates cytosine to 5-methylcytosine (m5C) at positions 34 and 48 of intron-containing tRNA(Leu)(CAA) precursors, and at positions 48, 49 and 50 of tRNA(Gly)(GCC) precursors. tRNA methylation is required generation of RNA fragments derived from tRNAs (tRFs). Also mediates C(5)-methylation of mitochondrial tRNAs. Catalyzes cytosine C(5)-methylation of mRNAs, leading to stabilize them and prevent mRNA decay. Cytosine C(5)-methylation of mRNAs also regulates mRNA export. Also mediates cytosine C(5)-methylation of non-coding RNAs, such as vault RNAs (vtRNAs), promoting their processing into regulatory small RNAs. Required for proper spindle assembly and chromosome segregation, independently of its methyltransferase activity. The protein is RNA cytosine-C(5)-methyltransferase NSUN2 of Xenopus tropicalis (Western clawed frog).